Reading from the N-terminus, the 643-residue chain is 1-deoxy-D-xylulose-5-phosphate synthase (643 aa).

Residues H72 and 113–115 contribute to the thiamine diphosphate site; that span reads GHA. Position 144 (D144) interacts with Mg(2+). Thiamine diphosphate contacts are provided by residues 145 to 146, N174, Y287, and E370; that span reads GA. Residue N174 participates in Mg(2+) binding.

The protein belongs to the transketolase family. DXPS subfamily. In terms of assembly, homodimer. Mg(2+) is required as a cofactor. It depends on thiamine diphosphate as a cofactor.

The catalysed reaction is D-glyceraldehyde 3-phosphate + pyruvate + H(+) = 1-deoxy-D-xylulose 5-phosphate + CO2. The protein operates within metabolic intermediate biosynthesis; 1-deoxy-D-xylulose 5-phosphate biosynthesis; 1-deoxy-D-xylulose 5-phosphate from D-glyceraldehyde 3-phosphate and pyruvate: step 1/1. Catalyzes the acyloin condensation reaction between C atoms 2 and 3 of pyruvate and glyceraldehyde 3-phosphate to yield 1-deoxy-D-xylulose-5-phosphate (DXP). This Prochlorococcus marinus (strain MIT 9211) protein is 1-deoxy-D-xylulose-5-phosphate synthase.